Consider the following 378-residue polypeptide: Schlafen family member 2 (378 aa).

Belongs to the Schlafen family. In terms of tissue distribution, mainly expressed in the thymus, lymph node and spleen.

Its subcellular location is the cytoplasm. TRNA-binding protein involved in T-cell mediated immunity. Plays a key role during the metabolic reprograming phase of activated T-cell, when T-cells produce reactive oxygen species (ROS): acts by binding tRNAs and protecting them from cleavage by the oxidative stress-activated ribonuclease angiogenin (ANG). Also required for T-cell quiescence maintenance. This chain is Schlafen family member 2, found in Mus musculus (Mouse).